The chain runs to 152 residues: Large ribosomal subunit protein uL15 (152 aa).

A disordered region spans residues 1 to 57 (MTSTLNTLKSNSGSRKKKLRKGRGIAAGQGASCGFGMRGQKSRSGRPTRPGFEGGQM). The segment covering 14 to 23 (SRKKKLRKGR) has biased composition (basic residues). Gly residues predominate over residues 25 to 37 (IAAGQGASCGFGM).

The protein belongs to the universal ribosomal protein uL15 family. Part of the 50S ribosomal subunit.

Functionally, binds to the 23S rRNA. The chain is Large ribosomal subunit protein uL15 from Prochlorococcus marinus (strain MIT 9215).